Here is a 544-residue protein sequence, read N- to C-terminus: MVAKNIKYNEEARKKIQKGVKTLAEAVKVTLGPKGRHVVIDKSFGSPQVTKDGVTVAKEVELADKHENMGAQMVKEVASKTADKAGDGTTTATVLAEAIYTEGLRNVTAGANPMDLKRGIDKAVKVVVDQVKKISKPVQHHKEIAQVATISANNDAEIGNLIAEAMEKVGKNGSITVEEAKGFETVLDVVEGMNFNRGYLSSYFATNPETQECVLEDALVLIYDKKISGIKDFLPVLQQVAESGRPLLIIAEDIEGEALATLVVNRIRGGFRVCAVKAPGFGDRRKAMLEDIAILTGGQLISEELGMKLENANLAMLGKAKKVIVSKEDTTIVEGMGEKEALEARCESIKKQIEDSSSDYDKEKLQERLAKLSGGVAVIRVGAATEIEMKEKKDRVDDAQHATIAAVEEGILPGGGTALIRCIPTLEAFLPMLTNEDEQIGARIVLKALSAPLKQIAANAGKEGAIIFQQVMSRSANEGYDALRDAYTDMLEAGILDPAKVTRSALESAASVAGLLLTTEALIAEIPEEKPAAAPAMPGAGMDY.

ATP contacts are provided by residues 30 to 33 (TLGP), Lys51, 87 to 91 (DGTTT), Gly415, 481 to 483 (DAL), and Asp497.

Belongs to the chaperonin (HSP60) family. As to quaternary structure, forms a cylinder of 14 subunits composed of two heptameric rings stacked back-to-back. Interacts with the co-chaperonin GroES.

It localises to the cytoplasm. The catalysed reaction is ATP + H2O + a folded polypeptide = ADP + phosphate + an unfolded polypeptide.. Functionally, together with its co-chaperonin GroES, plays an essential role in assisting protein folding. The GroEL-GroES system forms a nano-cage that allows encapsulation of the non-native substrate proteins and provides a physical environment optimized to promote and accelerate protein folding. The polypeptide is Chaperonin GroEL (Chlamydia trachomatis serovar L2 (strain ATCC VR-902B / DSM 19102 / 434/Bu)).